The primary structure comprises 242 residues: Biosynthetic peptidoglycan transglycosylase (242 aa).

The helical transmembrane segment at leucine 19–valine 39 threads the bilayer.

This sequence belongs to the glycosyltransferase 51 family.

It is found in the cell inner membrane. The catalysed reaction is [GlcNAc-(1-&gt;4)-Mur2Ac(oyl-L-Ala-gamma-D-Glu-L-Lys-D-Ala-D-Ala)](n)-di-trans,octa-cis-undecaprenyl diphosphate + beta-D-GlcNAc-(1-&gt;4)-Mur2Ac(oyl-L-Ala-gamma-D-Glu-L-Lys-D-Ala-D-Ala)-di-trans,octa-cis-undecaprenyl diphosphate = [GlcNAc-(1-&gt;4)-Mur2Ac(oyl-L-Ala-gamma-D-Glu-L-Lys-D-Ala-D-Ala)](n+1)-di-trans,octa-cis-undecaprenyl diphosphate + di-trans,octa-cis-undecaprenyl diphosphate + H(+). It participates in cell wall biogenesis; peptidoglycan biosynthesis. In terms of biological role, peptidoglycan polymerase that catalyzes glycan chain elongation from lipid-linked precursors. The protein is Biosynthetic peptidoglycan transglycosylase of Escherichia coli (strain SMS-3-5 / SECEC).